Here is a 298-residue protein sequence, read N- to C-terminus: Acetylglutamate kinase (298 aa).

Substrate-binding positions include 68–69 (GG), Arg-90, and Asn-195.

It belongs to the acetylglutamate kinase family. ArgB subfamily.

The protein resides in the cytoplasm. It catalyses the reaction N-acetyl-L-glutamate + ATP = N-acetyl-L-glutamyl 5-phosphate + ADP. The protein operates within amino-acid biosynthesis; L-arginine biosynthesis; N(2)-acetyl-L-ornithine from L-glutamate: step 2/4. Its function is as follows. Catalyzes the ATP-dependent phosphorylation of N-acetyl-L-glutamate. In Hydrogenovibrio crunogenus (strain DSM 25203 / XCL-2) (Thiomicrospira crunogena), this protein is Acetylglutamate kinase.